We begin with the raw amino-acid sequence, 220 residues long: Early protein OPG038 (220 aa).

The signal sequence occupies residues 1 to 17; it reads MVYKLVLLFCIASLGYS. N-linked (GlcNAc...) asparagine; by host glycosylation is found at Asn-49, Asn-79, Asn-118, and Asn-154.

This sequence belongs to the orthopoxvirus OPG038 family. As to quaternary structure, homooligomer. Interacts with host CD80 and CD86 when secreted. In terms of processing, glycosylated by host.

Its subcellular location is the host endoplasmic reticulum. The protein resides in the secreted. Plays a role in immune evasion. When secreted, inhibits T-cell activation by preventing the binding of host CD80 and CD86 to soluble CTLA4 and CD28. In the infected cell, may inhibits host NF kappa B activation. This is Early protein OPG038 (OPG038) from Bos taurus (Bovine).